A 118-amino-acid chain; its full sequence is Small ribosomal subunit protein uS13 (118 aa).

The interval 92–118 (RRSLPVRGQRTKTNARTRKGPRKPIKK) is disordered.

The protein belongs to the universal ribosomal protein uS13 family. In terms of assembly, part of the 30S ribosomal subunit. Forms a loose heterodimer with protein S19. Forms two bridges to the 50S subunit in the 70S ribosome.

Functionally, located at the top of the head of the 30S subunit, it contacts several helices of the 16S rRNA. In the 70S ribosome it contacts the 23S rRNA (bridge B1a) and protein L5 of the 50S subunit (bridge B1b), connecting the 2 subunits; these bridges are implicated in subunit movement. Contacts the tRNAs in the A and P-sites. The sequence is that of Small ribosomal subunit protein uS13 from Acinetobacter baumannii (strain AB307-0294).